The primary structure comprises 170 residues: Lipoprotein signal peptidase (170 aa).

The next 3 membrane-spanning stretches (helical) occupy residues 5-25 (VYHQ…LDQG), 70-90 (WFFT…ICRV), and 98-118 (AFAL…RIIH). Active-site residues include D123 and D141. Residues 137–157 (FNLADAAISLGAMVLIADLFI) form a helical membrane-spanning segment.

Belongs to the peptidase A8 family.

The protein localises to the cell inner membrane. The enzyme catalyses Release of signal peptides from bacterial membrane prolipoproteins. Hydrolyzes -Xaa-Yaa-Zaa-|-(S,diacylglyceryl)Cys-, in which Xaa is hydrophobic (preferably Leu), and Yaa (Ala or Ser) and Zaa (Gly or Ala) have small, neutral side chains.. It participates in protein modification; lipoprotein biosynthesis (signal peptide cleavage). Its function is as follows. This protein specifically catalyzes the removal of signal peptides from prolipoproteins. This Cellvibrio japonicus (strain Ueda107) (Pseudomonas fluorescens subsp. cellulosa) protein is Lipoprotein signal peptidase.